We begin with the raw amino-acid sequence, 351 residues long: Phosphate acyltransferase (351 aa).

Belongs to the PlsX family. Homodimer. Probably interacts with PlsY.

The protein resides in the cytoplasm. It catalyses the reaction a fatty acyl-[ACP] + phosphate = an acyl phosphate + holo-[ACP]. It participates in lipid metabolism; phospholipid metabolism. Its function is as follows. Catalyzes the reversible formation of acyl-phosphate (acyl-PO(4)) from acyl-[acyl-carrier-protein] (acyl-ACP). This enzyme utilizes acyl-ACP as fatty acyl donor, but not acyl-CoA. In Paramagnetospirillum magneticum (strain ATCC 700264 / AMB-1) (Magnetospirillum magneticum), this protein is Phosphate acyltransferase.